Here is a 139-residue protein sequence, read N- to C-terminus: Transcription antitermination protein NusB (139 aa).

This sequence belongs to the NusB family.

In terms of biological role, involved in transcription antitermination. Required for transcription of ribosomal RNA (rRNA) genes. Binds specifically to the boxA antiterminator sequence of the ribosomal RNA (rrn) operons. This is Transcription antitermination protein NusB from Rubrobacter xylanophilus (strain DSM 9941 / JCM 11954 / NBRC 16129 / PRD-1).